The sequence spans 189 residues: GTP cyclohydrolase 1 (189 aa).

3 residues coordinate Zn(2+): Cys78, His81, and Cys150.

It belongs to the GTP cyclohydrolase I family. As to quaternary structure, homomer.

It catalyses the reaction GTP + H2O = 7,8-dihydroneopterin 3'-triphosphate + formate + H(+). The protein operates within cofactor biosynthesis; 7,8-dihydroneopterin triphosphate biosynthesis; 7,8-dihydroneopterin triphosphate from GTP: step 1/1. This is GTP cyclohydrolase 1 from Bacillus cytotoxicus (strain DSM 22905 / CIP 110041 / 391-98 / NVH 391-98).